The chain runs to 211 residues: Glycerol-3-phosphate acyltransferase (211 aa).

Helical transmembrane passes span 10–30, 63–83, 90–110, 126–146, 152–172, and 174–194; these read FYTW…FGLL, TLTL…IKFL, SIII…PIWL, LGYY…FFIL, LSAL…YPHL, and AHCI…ANIA.

Belongs to the PlsY family. As to quaternary structure, probably interacts with PlsX.

The protein localises to the cell inner membrane. It carries out the reaction an acyl phosphate + sn-glycerol 3-phosphate = a 1-acyl-sn-glycero-3-phosphate + phosphate. It participates in lipid metabolism; phospholipid metabolism. Catalyzes the transfer of an acyl group from acyl-phosphate (acyl-PO(4)) to glycerol-3-phosphate (G3P) to form lysophosphatidic acid (LPA). This enzyme utilizes acyl-phosphate as fatty acyl donor, but not acyl-CoA or acyl-ACP. This chain is Glycerol-3-phosphate acyltransferase, found in Bartonella quintana (strain Toulouse) (Rochalimaea quintana).